The primary structure comprises 404 residues: MPSNKSVSDAPITQFVNCRILKNHKLQWEDLWVREGKILNPEKLFFDEQGFADHRVDCENKIIAPGFIDVQLNGGYGIDFSQASSDIRGGVALVAKKILEHGVTSFCPTLVTSPPHIYHKVIPELRVQDGGPEGAGVLGIHLEGPFISEEKRGAHPPKFLRTFQSGGVADLMETYGQLENVAMVTLAPELTNSAAAIHELSSRGITVSVGHSMADLSQAEEAVQNGATFITHLFNAMLPFHHRDPGIVGLLTSDRIPPGRTVYYGMIADGIHTHPAALRIAHRAHPAGLVLVTDAVTAMGLPPGRHTLGQQQIDIQGLHAYVAGTTTLSGSIATMDMCVRHFREASGCTVEAALEAASLHPAQLLGISHRKGTLEFGADADFIVLDDMLTVRETYIAGQQVWRK.

Residue glutamate 143 participates in a divalent metal cation binding. 154 to 155 (AH) contributes to the substrate binding site. Residues histidine 211 and histidine 232 each coordinate a divalent metal cation. Substrate-binding positions include 235–236 (NA), arginine 243, and 269–272 (DGIH). Aspartate 294 functions as the Proton donor/acceptor in the catalytic mechanism. 328–330 (LSG) contacts substrate.

It belongs to the metallo-dependent hydrolases superfamily. NagA family. A divalent metal cation serves as cofactor.

The enzyme catalyses N-acetyl-D-glucosamine 6-phosphate + H2O = D-glucosamine 6-phosphate + acetate. The protein operates within amino-sugar metabolism; N-acetylneuraminate degradation. In terms of biological role, hydrolyzes the N-glycolyl group from N-glycolylglucosamine 6-phosphate (GlcNGc-6-P) in the N-glycolylneuraminic acid (Neu5Gc) degradation pathway. The polypeptide is N-acetylglucosamine-6-phosphate deacetylase (amdhd2) (Danio rerio (Zebrafish)).